A 408-amino-acid chain; its full sequence is Tryptophan synthase beta chain (408 aa).

K90 is modified (N6-(pyridoxal phosphate)lysine).

It belongs to the TrpB family. Tetramer of two alpha and two beta chains. The cofactor is pyridoxal 5'-phosphate.

It carries out the reaction (1S,2R)-1-C-(indol-3-yl)glycerol 3-phosphate + L-serine = D-glyceraldehyde 3-phosphate + L-tryptophan + H2O. It functions in the pathway amino-acid biosynthesis; L-tryptophan biosynthesis; L-tryptophan from chorismate: step 5/5. Functionally, the beta subunit is responsible for the synthesis of L-tryptophan from indole and L-serine. The protein is Tryptophan synthase beta chain of Bacillus licheniformis (strain ATCC 14580 / DSM 13 / JCM 2505 / CCUG 7422 / NBRC 12200 / NCIMB 9375 / NCTC 10341 / NRRL NRS-1264 / Gibson 46).